The following is a 364-amino-acid chain: Gap junction delta-4 protein (364 aa).

Residues 1–19 (MEKLNLLGFLIITLNCNVT) lie on the Cytoplasmic side of the membrane. A helical transmembrane segment spans residues 20-40 (IMGMIWLIVEVLLRMLVVVLA). The Extracellular segment spans residues 41–76 (GSPIYEDEQERFICNTLQPGCANVCYDLFSPVSPLR). Residues 77-97 (FWLVQSLALLLPSVVFGTYTL) traverse the membrane as a helical segment. The Cytoplasmic portion of the chain corresponds to 98-128 (HRGAKLAAVGGACRPQVPDLSTAYLVHLLLR). Residues 129-149 (MLLEAGLAFLHYFLFGFSVPA) form a helical membrane-spanning segment. The Extracellular segment spans residues 150 to 173 (RVSCSHVPCSGAVDCYVSRPTEKS). A helical transmembrane segment spans residues 174-194 (LLILFFWAVSALSFLLSLADL). The Cytoplasmic portion of the chain corresponds to 195 to 364 (LWILPRRKTL…HLRTKKSEWV (170 aa)). The segment covering 331 to 340 (HLARHSSASK) has biased composition (polar residues). The interval 331-364 (HLARHSSASKPQAPCRLTTSGSAPHLRTKKSEWV) is disordered.

It belongs to the connexin family. Delta-type subfamily. As to quaternary structure, a connexon is composed of a hexamer of connexins.

It is found in the cell membrane. Its subcellular location is the cell junction. It localises to the gap junction. Functionally, one gap junction consists of a cluster of closely packed pairs of transmembrane channels, the connexons, through which materials of low MW diffuse from one cell to a neighboring cell. The protein is Gap junction delta-4 protein (Gjd4) of Mus musculus (Mouse).